Reading from the N-terminus, the 110-residue chain is Cuticle protein 13 (110 aa).

This Limulus polyphemus (Atlantic horseshoe crab) protein is Cuticle protein 13.